We begin with the raw amino-acid sequence, 1055 residues long: cAMP and cAMP-inhibited cGMP 3',5'-cyclic phosphodiesterase 10A (1055 aa).

Disordered regions lie at residues 1–90 (MASL…RGGG), 151–193 (AAAA…GRRR), and 205–250 (LPAR…RPQG). Gly residues-rich tracts occupy residues 79–90 (GGPGALSARGGG) and 154–168 (AGGG…GGGQ). Residues 220-231 (PLGQAARRAGSP) are compositionally biased toward low complexity. Residues 232 to 243 (GFPGAGPGGGGQ) are compositionally biased toward gly residues. At threonine 282 the chain carries Phosphothreonine. 2 consecutive GAF domains span residues 367-510 (DNQL…SVAI) and 542-688 (AIDS…ALAL). 3',5'-cyclic AMP is bound by residues 562–563 (RC), 606–607 (IA), threonine 640, glutamine 659, and histidine 791. The 318-residue stretch at 718 to 1035 (TSEEWQGLMQ…SQWEKVIRGE (318 aa)) folds into the PDEase domain. The active-site Proton donor is the histidine 791. Histidine 791 provides a ligand contact to 3',5'-cyclic GMP. Positions 795, 829, 830, and 940 each coordinate a divalent metal cation. Residue glutamine 992 participates in 3',5'-cyclic AMP binding. Glutamine 992 contacts 3',5'-cyclic GMP.

Belongs to the cyclic nucleotide phosphodiesterase family. Homodimer. Requires a divalent metal cation as cofactor. Phosphorylated on Thr-16. As to expression, abundant in the putamen and caudate nucleus regions of brain and testis, moderately expressed in the thyroid gland, pituitary gland, thalamus and cerebellum.

It is found in the cytoplasm. The protein resides in the cytosol. The catalysed reaction is a nucleoside 3',5'-cyclic phosphate + H2O = a nucleoside 5'-phosphate + H(+). The enzyme catalyses 3',5'-cyclic AMP + H2O = AMP + H(+). It carries out the reaction 3',5'-cyclic GMP + H2O = GMP + H(+). Its pathway is purine metabolism; 3',5'-cyclic AMP degradation; AMP from 3',5'-cyclic AMP: step 1/1. The protein operates within purine metabolism; 3',5'-cyclic GMP degradation; GMP from 3',5'-cyclic GMP: step 1/1. Its activity is regulated as follows. Inhibited by dipyridamole and moderately by IBMX. cGMP acts as an allosteric activator. In terms of biological role, plays a role in signal transduction by regulating the intracellular concentration of cyclic nucleotides. Can hydrolyze both cAMP and cGMP, but has higher affinity for cAMP and is more efficient with cAMP as substrate. May play a critical role in regulating cAMP and cGMP levels in the striatum, a region of the brain that contributes to the control of movement and cognition. The protein is cAMP and cAMP-inhibited cGMP 3',5'-cyclic phosphodiesterase 10A (PDE10A) of Homo sapiens (Human).